Reading from the N-terminus, the 161-residue chain is RNA pyrophosphohydrolase (161 aa).

Positions 6 to 149 (GYRPNVGIIL…KKDVYRRALK (144 aa)) constitute a Nudix hydrolase domain. The Nudix box signature appears at 38–59 (GGIKSDETPEEALFRELKEEVG).

The protein belongs to the Nudix hydrolase family. RppH subfamily. A divalent metal cation is required as a cofactor.

In terms of biological role, accelerates the degradation of transcripts by removing pyrophosphate from the 5'-end of triphosphorylated RNA, leading to a more labile monophosphorylated state that can stimulate subsequent ribonuclease cleavage. The polypeptide is RNA pyrophosphohydrolase (Marinomonas sp. (strain MWYL1)).